Consider the following 223-residue polypeptide: MFAVIKTGGKQYRVAANDLLKIEKVEANVGDIVEIGHVLAHGEGENVTFGAPFVDGALVTAEVVEQGKNRTVIAFKKRRRQNSRRKIGHRQLLTTVRISEILLGGAKPAKKAAVKAEAKAEVAAEAAPKEAKAKKEAAPKADVTAETAAAPLFKAPKGEPDDLTVIKGIGPVAAKDLNEQGIITFAQLAKLTDKDVAKIDEHMPFSADQIKDWREQAKELAKK.

This sequence belongs to the bacterial ribosomal protein bL21 family. As to quaternary structure, part of the 50S ribosomal subunit. Contacts protein L20.

This protein binds to 23S rRNA in the presence of protein L20. This is Large ribosomal subunit protein bL21 from Mesorhizobium japonicum (strain LMG 29417 / CECT 9101 / MAFF 303099) (Mesorhizobium loti (strain MAFF 303099)).